The primary structure comprises 669 residues: Cysteine-rich receptor-like protein kinase 34 (669 aa).

A signal peptide spans 1–23 (MKLKISFLPTFLIFLISLDSVTA). Gnk2-homologous domains follow at residues 24 to 123 (QEIC…NVSF) and 133 to 246 (ETLY…LYPY). The Extracellular portion of the chain corresponds to 24-285 (QEICFSGFFK…SDRANTTIKG (262 aa)). Residues Asn-35, Asn-52, Asn-103, Asn-120, Asn-147, Asn-172, Asn-252, and Asn-280 are each glycosylated (N-linked (GlcNAc...) asparagine). A helical membrane pass occupies residues 286–306 (IIVAIVVPIIVILVSLVVLLV). Residues 307 to 669 (VCRRKKSYKT…DASITEFYPR (363 aa)) lie on the Cytoplasmic side of the membrane. One can recognise a Protein kinase domain in the interval 345-624 (FSDSNMIGRG…MMLTSSTTTL (280 aa)). ATP contacts are provided by residues 351–359 (IGRGGFGEV) and Lys-373. Tyr-418 is modified (phosphotyrosine). Residue Asp-470 is the Proton acceptor of the active site. Ser-474 bears the Phosphoserine mark. At Thr-510 the chain carries Phosphothreonine. Position 518 is a phosphotyrosine (Tyr-518).

This sequence belongs to the protein kinase superfamily. Ser/Thr protein kinase family. CRK subfamily.

It localises to the membrane. It catalyses the reaction L-seryl-[protein] + ATP = O-phospho-L-seryl-[protein] + ADP + H(+). The catalysed reaction is L-threonyl-[protein] + ATP = O-phospho-L-threonyl-[protein] + ADP + H(+). This chain is Cysteine-rich receptor-like protein kinase 34, found in Arabidopsis thaliana (Mouse-ear cress).